A 273-amino-acid polypeptide reads, in one-letter code: WIMGHMVNAIAQIDEFVNLGANSIETDVSFDDSANPEYTYHGVPCDCGRTCTKWEYFNEFLKGLRKATTPGDSKYHEKLVLVVFDLKTSSLYDNQASDAGKKLAKSLLQNYWNNGNNGGRAYIVLSIPNLAHYKLITGFKETLTSEGHPELMDKVGYDFSGNDEIGDVAKTYKKAGVTGHVWQSDGITNCLLRGLDRVRKAVANRDSSNGYINKVYYWTVDKRATTRDALDAGVDGIMTNYPDVIADVLNESAYKAKFRIASYDDNPWETFKN.

The active site involves His-5. Mg(2+) is bound by residues Glu-25 and Asp-27. His-41 serves as the catalytic Nucleophile. 2 disulfide bridges follow: Cys-45-Cys-51 and Cys-47-Cys-190. Asp-85 contributes to the Mg(2+) binding site. Asn-250 carries an N-linked (GlcNAc...) asparagine glycan.

Belongs to the arthropod phospholipase D family. Class II subfamily. It depends on Mg(2+) as a cofactor. As to expression, expressed by the venom gland.

Its subcellular location is the secreted. The catalysed reaction is an N-(acyl)-sphingosylphosphocholine = an N-(acyl)-sphingosyl-1,3-cyclic phosphate + choline. It carries out the reaction an N-(acyl)-sphingosylphosphoethanolamine = an N-(acyl)-sphingosyl-1,3-cyclic phosphate + ethanolamine. The enzyme catalyses a 1-acyl-sn-glycero-3-phosphocholine = a 1-acyl-sn-glycero-2,3-cyclic phosphate + choline. It catalyses the reaction a 1-acyl-sn-glycero-3-phosphoethanolamine = a 1-acyl-sn-glycero-2,3-cyclic phosphate + ethanolamine. Its function is as follows. Dermonecrotic toxins cleave the phosphodiester linkage between the phosphate and headgroup of certain phospholipids (sphingolipid and lysolipid substrates), forming an alcohol (often choline) and a cyclic phosphate. This toxin acts on sphingomyelin (SM). It may also act on ceramide phosphoethanolamine (CPE), lysophosphatidylcholine (LPC) and lysophosphatidylethanolamine (LPE), but not on lysophosphatidylserine (LPS), and lysophosphatidylglycerol (LPG). It acts by transphosphatidylation, releasing exclusively cyclic phosphate products as second products. Induces dermonecrosis, hemolysis, increased vascular permeability, edema, inflammatory response, and platelet aggregation. The protein is Dermonecrotic toxin LdSicTox-alphaIB1aii of Loxosceles deserta (Desert recluse spider).